We begin with the raw amino-acid sequence, 140 residues long: Putative pre-16S rRNA nuclease (140 aa).

Belongs to the YqgF nuclease family.

The protein localises to the cytoplasm. In terms of biological role, could be a nuclease involved in processing of the 5'-end of pre-16S rRNA. This chain is Putative pre-16S rRNA nuclease, found in Vibrio vulnificus (strain CMCP6).